The chain runs to 265 residues: Mlc titration factor A (265 aa).

His-111, His-148, His-152, and Glu-211 together coordinate Zn(2+).

The protein belongs to the MtfA family. As to quaternary structure, interacts with Mlc. Requires Zn(2+) as cofactor.

Its subcellular location is the cytoplasm. In terms of biological role, involved in the modulation of the activity of the glucose-phosphotransferase system (glucose-PTS). Interacts with the transcriptional repressor Mlc, preventing its interaction with DNA and leading to the modulation of expression of genes regulated by Mlc, including ptsG, which encodes the PTS system glucose-specific EIICB component. Functionally, shows zinc-dependent metallopeptidase activity. The sequence is that of Mlc titration factor A from Klebsiella pneumoniae (strain 342).